A 471-amino-acid chain; its full sequence is Neuraminidase (471 aa).

Over 1–6 the chain is Intravirion; the sequence is MNPNQK. Residues 7 to 27 traverse the membrane as a helical segment; that stretch reads LFALSGVAIALSVLNLLIGIS. The interval 11–33 is involved in apical transport and lipid raft association; the sequence is SGVAIALSVLNLLIGISNVGLNV. Residues 28-471 are Virion surface-facing; sequence NVGLNVSLHL…PDGAQIQYFS (444 aa). N-linked (GlcNAc...) asparagine; by host glycans are attached at residues asparagine 32, asparagine 47, asparagine 56, asparagine 57, asparagine 67, asparagine 68, and asparagine 87. Residues 36 to 87 are hypervariable stalk region; it reads HLKGAGTKQEENLTCTTITQNNTTVVENTYVNNTTIITKEPEFRAPSYLLLN. The segment at 90 to 471 is head of neuraminidase; that stretch reads LCNVEGWVVV…PDGAQIQYFS (382 aa). 8 disulfide bridges follow: cysteine 91–cysteine 419, cysteine 123–cysteine 128, cysteine 183–cysteine 230, cysteine 232–cysteine 237, cysteine 278–cysteine 291, cysteine 280–cysteine 289, cysteine 318–cysteine 336, and cysteine 423–cysteine 450. Arginine 117 is a substrate binding site. N-linked (GlcNAc...) asparagine; by host glycosylation occurs at asparagine 145. Aspartate 150 acts as the Proton donor/acceptor in catalysis. Arginine 151 provides a ligand contact to substrate. Asparagine 200 and asparagine 234 each carry an N-linked (GlcNAc...) asparagine; by host glycan. 276-277 lines the substrate pocket; the sequence is EE. Arginine 292 provides a ligand contact to substrate. Residues aspartate 293, glycine 297, and aspartate 324 each coordinate Ca(2+). Arginine 371 contributes to the substrate binding site. An N-linked (GlcNAc...) asparagine; by host glycan is attached at asparagine 401. The active-site Nucleophile is the tyrosine 405.

Belongs to the glycosyl hydrolase 34 family. As to quaternary structure, homotetramer. Ca(2+) serves as cofactor. In terms of processing, N-glycosylated.

It is found in the virion membrane. The protein localises to the host apical cell membrane. The enzyme catalyses Hydrolysis of alpha-(2-&gt;3)-, alpha-(2-&gt;6)-, alpha-(2-&gt;8)- glycosidic linkages of terminal sialic acid residues in oligosaccharides, glycoproteins, glycolipids, colominic acid and synthetic substrates.. With respect to regulation, inhibited by the neuraminidase inhibitors zanamivir (Relenza) and oseltamivir (Tamiflu). These drugs interfere with the release of progeny virus from infected cells and are effective against all influenza strains. Resistance to neuraminidase inhibitors is quite rare. Functionally, catalyzes the removal of terminal sialic acid residues from viral and cellular glycoconjugates. Cleaves off the terminal sialic acids on the glycosylated HA during virus budding to facilitate virus release. Additionally helps virus spread through the circulation by further removing sialic acids from the cell surface. These cleavages prevent self-aggregation and ensure the efficient spread of the progeny virus from cell to cell. Otherwise, infection would be limited to one round of replication. Described as a receptor-destroying enzyme because it cleaves a terminal sialic acid from the cellular receptors. May facilitate viral invasion of the upper airways by cleaving the sialic acid moieties on the mucin of the airway epithelial cells. Likely to plays a role in the budding process through its association with lipid rafts during intracellular transport. May additionally display a raft-association independent effect on budding. Plays a role in the determination of host range restriction on replication and virulence. Sialidase activity in late endosome/lysosome traffic seems to enhance virus replication. The protein is Neuraminidase of Aves (Horse).